The primary structure comprises 434 residues: Putative D-alanyl-D-alanine carboxypeptidase (434 aa).

Residues 7–25 (YLSLLAVSCSVSAAKYPVL) traverse the membrane as a helical; Signal-anchor segment.

The protein belongs to the peptidase S12 family. YfeW subfamily.

Its subcellular location is the cell inner membrane. The enzyme catalyses Preferential cleavage: (Ac)2-L-Lys-D-Ala-|-D-Ala. Also transpeptidation of peptidyl-alanyl moieties that are N-acyl substituents of D-alanine.. Penicillin-binding protein. Has low DD-carboxypeptidase activity. This is Putative D-alanyl-D-alanine carboxypeptidase from Escherichia coli (strain K12).